A 95-amino-acid polypeptide reads, in one-letter code: Small ribosomal subunit protein bS18 (95 aa).

It belongs to the bacterial ribosomal protein bS18 family. In terms of assembly, part of the 30S ribosomal subunit. Forms a tight heterodimer with protein bS6.

In terms of biological role, binds as a heterodimer with protein bS6 to the central domain of the 16S rRNA, where it helps stabilize the platform of the 30S subunit. This chain is Small ribosomal subunit protein bS18, found in Rickettsia africae (strain ESF-5).